Consider the following 116-residue polypeptide: Large ribosomal subunit protein bL17 (116 aa).

Belongs to the bacterial ribosomal protein bL17 family. In terms of assembly, part of the 50S ribosomal subunit. Contacts protein L32.

The sequence is that of Large ribosomal subunit protein bL17 from Nostoc punctiforme (strain ATCC 29133 / PCC 73102).